A 366-amino-acid chain; its full sequence is tRNA/tmRNA (uracil-C(5))-methyltransferase (366 aa).

The S-adenosyl-L-methionine site is built by Gln190, Tyr218, Asn223, Glu239, and Asp299. The active-site Nucleophile is Cys324. Glu358 acts as the Proton acceptor in catalysis.

It belongs to the class I-like SAM-binding methyltransferase superfamily. RNA M5U methyltransferase family. TrmA subfamily.

It catalyses the reaction uridine(54) in tRNA + S-adenosyl-L-methionine = 5-methyluridine(54) in tRNA + S-adenosyl-L-homocysteine + H(+). The catalysed reaction is uridine(341) in tmRNA + S-adenosyl-L-methionine = 5-methyluridine(341) in tmRNA + S-adenosyl-L-homocysteine + H(+). In terms of biological role, dual-specificity methyltransferase that catalyzes the formation of 5-methyluridine at position 54 (m5U54) in all tRNAs, and that of position 341 (m5U341) in tmRNA (transfer-mRNA). This Salmonella newport (strain SL254) protein is tRNA/tmRNA (uracil-C(5))-methyltransferase.